We begin with the raw amino-acid sequence, 494 residues long: MRLTPNYDYEVSSINKKKRGYIVQIIGPVLDVAFSPGMMPSIYNALVVQGRHNQEPNVTCEVQQLLGNNRVRAVAMSDTDGLMRGMEVIDTGTPISVPVGGSTLGRIFNVLGEPVDQLGPVETNQLSPIHRSAPPFLKLDTRLSIFETGIKVVDLLAPYRRGGKVGLFGGAGVGKTVLIMELINNIAKAYGGVSVFGGVGERTREGNDLYMEMKESGVINQQKLDESKVALVYGQMNEPPGARMRVGLTALTMAEYFRDVNRQDVLLFIDNIFRFVQAGSEVSALLGRMPSAVGYQPTLSTEMGSLQERITSTKEGSITSIQAVYVPADDLTDPAPATTFAHLDATTVLSRSLAAKGIYPAVDPLDSTSMMLQPQIVGEQHYKTAQRVKQTLQRYKELQDIIAILGLDELSDDDRLTVARARKIERFLSQPFFVAEIFTGSPGKYVSLAETIRGCTLILSGEFDDLPEQAFYLVGTIDEVNAKAMLEEEKNFTK.

169–176 (GGAGVGKT) lines the ATP pocket.

The protein belongs to the ATPase alpha/beta chains family. F-type ATPases have 2 components, CF(1) - the catalytic core - and CF(0) - the membrane proton channel. CF(1) has five subunits: alpha(3), beta(3), gamma(1), delta(1), epsilon(1). CF(0) has four main subunits: a(1), b(1), b'(1) and c(9-12).

It is found in the plastid thylakoid membrane. The enzyme catalyses ATP + H2O + 4 H(+)(in) = ADP + phosphate + 5 H(+)(out). Produces ATP from ADP in the presence of a proton gradient across the membrane. The catalytic sites are hosted primarily by the beta subunits. The sequence is that of ATP synthase subunit beta, plastid (atpB) from Cuscuta gronovii (Common dodder).